Here is a 1123-residue protein sequence, read N- to C-terminus: RNA-binding protein 6 (1123 aa).

Disordered regions lie at residues 1-391 (MWGD…EGGL) and 413-454 (LPGS…EEKP). S17 carries the phosphoserine modification. K36 is covalently cross-linked (Glycyl lysine isopeptide (Lys-Gly) (interchain with G-Cter in SUMO2)). Positions 79-97 (DGPHGDYRGGEGPGHDFRG) are enriched in basic and acidic residues. Over residues 98 to 114 (GDFSSSDFQSRDSSQLD) the composition is skewed to low complexity. Basic and acidic residues-rich tracts occupy residues 115–131 (FRGR…REGP) and 145–237 (YRGR…DFRG). Phosphoserine is present on S240. Composition is skewed to basic and acidic residues over residues 245–286 (LDFR…REMP) and 301–323 (QDRE…HTIE). Residue K331 forms a Glycyl lysine isopeptide (Lys-Gly) (interchain with G-Cter in SUMO2) linkage. The span at 332-354 (GEFEHSETREGETQGVAFEHESP) shows a compositional bias: basic and acidic residues. Residue T344 is modified to Phosphothreonine. Over residues 356 to 365 (DFQNSQSPVQ) the composition is skewed to polar residues. Phosphoserine occurs at positions 360 and 362. Composition is skewed to basic and acidic residues over residues 366-391 (DQDK…EGGL) and 431-454 (KTAR…EEKP). Residues K386, K453, K469, and K569 each participate in a glycyl lysine isopeptide (Lys-Gly) (interchain with G-Cter in SUMO2) cross-link. The 81-residue stretch at 456–536 (RLIRLSGVPE…KEVTLEYVSS (81 aa)) folds into the RRM domain. Disordered regions lie at residues 574 to 654 (TYPQ…QDGE), 741 to 787 (KRRN…QSSS), and 827 to 948 (EEEI…EEDK). Basic and acidic residues-rich tracts occupy residues 597–654 (PADK…QDGE) and 742–754 (RRND…DHMH). Polar residues predominate over residues 772–787 (SDWSSDTNRQGQQSSS). Positions 843–860 (SKKEMSKRDGKEKKDRGV) are enriched in basic and acidic residues. Glycyl lysine isopeptide (Lys-Gly) (interchain with G-Cter in SUMO2) cross-links involve residues K871, K879, and K887. S891 carries the post-translational modification Phosphoserine. The segment covering 910–922 (GDSDYEEEEEEEQ) has biased composition (acidic residues). Residues 934–948 (QKREEQTKKENEEDK) show a composition bias toward basic and acidic residues. Glycyl lysine isopeptide (Lys-Gly) (interchain with G-Cter in SUMO2) cross-links involve residues K935, K948, K991, and K1019. Residues 1004–1051 (EREGKFKGRGNDRREKLQSFDSPERKRIKYSRETDSDRKLVDKEDIDT) show a composition bias toward basic and acidic residues. Residues 1004-1106 (EREGKFKGRG…RTSKRQSNET (103 aa)) form a disordered region. S1022 and S1025 each carry phosphoserine. Glycyl lysine isopeptide (Lys-Gly) (interchain with G-Cter in SUMO2) cross-links involve residues K1042, K1046, and K1066. Positions 1051–1097 (TSSKGGCVQQATGWRKGTGLGYGHPGLASSEEAEGRMRGPSVGASGR) constitute a G-patch domain.

In terms of assembly, may interact with FAM168B. In terms of tissue distribution, ubiquitous in adults.

It is found in the nucleus. Its function is as follows. Specifically binds poly(G) RNA homopolymers in vitro. This Homo sapiens (Human) protein is RNA-binding protein 6 (RBM6).